A 252-amino-acid chain; its full sequence is 3-dehydroquinate dehydratase (252 aa).

3-dehydroquinate-binding positions include 46–48 and arginine 82; that span reads EWR. The Proton donor/acceptor role is filled by histidine 143. The active-site Schiff-base intermediate with substrate is lysine 170. Positions 212, 231, and 235 each coordinate 3-dehydroquinate.

The protein belongs to the type-I 3-dehydroquinase family. In terms of assembly, homodimer.

The catalysed reaction is 3-dehydroquinate = 3-dehydroshikimate + H2O. Its pathway is metabolic intermediate biosynthesis; chorismate biosynthesis; chorismate from D-erythrose 4-phosphate and phosphoenolpyruvate: step 3/7. Functionally, involved in the third step of the chorismate pathway, which leads to the biosynthesis of aromatic amino acids. Catalyzes the cis-dehydration of 3-dehydroquinate (DHQ) and introduces the first double bond of the aromatic ring to yield 3-dehydroshikimate. In Listeria welshimeri serovar 6b (strain ATCC 35897 / DSM 20650 / CCUG 15529 / CIP 8149 / NCTC 11857 / SLCC 5334 / V8), this protein is 3-dehydroquinate dehydratase.